Here is a 149-residue protein sequence, read N- to C-terminus: Calmodulin-5/6/7/8 (149 aa).

The residue at position 2 (alanine 2) is an N-acetylalanine. 4 consecutive EF-hand domains span residues 8–43, 44–79, 81–116, and 117–149; these read DQIS…LGQN, PTEA…KMKD, DSEE…LGEK, and LTDE…MMAK. Ca(2+) contacts are provided by aspartate 21, aspartate 23, aspartate 25, cysteine 27, glutamate 32, aspartate 57, aspartate 59, asparagine 61, threonine 63, glutamate 68, aspartate 94, aspartate 96, asparagine 98, and glutamate 105. Lysine 116 bears the N6,N6,N6-trimethyllysine mark. Residues aspartate 130, aspartate 132, aspartate 134, glutamine 136, and glutamate 141 each coordinate Ca(2+).

This sequence belongs to the calmodulin family. As to expression, high expression of PCM5 and 8 in stolon tips and stems, moderate in roots, and low in leaves. Steady-state expression of PCM6 in all the tissues tested, except in the leaves where the expression is lower.

Functionally, calmodulin mediates the control of a large number of enzymes, ion channels and other proteins by Ca(2+). Among the enzymes to be stimulated by the calmodulin-Ca(2+) complex are a number of protein kinases and phosphatases. The protein is Calmodulin-5/6/7/8 (PCM5) of Solanum tuberosum (Potato).